Here is a 284-residue protein sequence, read N- to C-terminus: Acetylglutamate kinase (284 aa).

Residues 54 to 55 (GG), arginine 76, and asparagine 179 each bind substrate.

Belongs to the acetylglutamate kinase family. ArgB subfamily.

The protein resides in the cytoplasm. The catalysed reaction is N-acetyl-L-glutamate + ATP = N-acetyl-L-glutamyl 5-phosphate + ADP. The protein operates within amino-acid biosynthesis; L-arginine biosynthesis; N(2)-acetyl-L-ornithine from L-glutamate: step 2/4. Catalyzes the ATP-dependent phosphorylation of N-acetyl-L-glutamate. The sequence is that of Acetylglutamate kinase from Sorangium cellulosum (strain So ce56) (Polyangium cellulosum (strain So ce56)).